Here is a 348-residue protein sequence, read N- to C-terminus: NADH-ubiquinone oxidoreductase chain 2 (348 aa).

9 helical membrane passes run 1–21 (MSPY…TITA), 60–80 (FLTQ…NAWL), 96–116 (TLII…TWLP), 149–169 (NPTL…WGGL), 177–194 (ILAY…LILQ), 198–220 (TLTL…TFIL), 238–258 (ILTS…PLTG), 273–293 (DLAP…YFYL), and 328–348 (MAAS…LFNI).

The protein belongs to the complex I subunit 2 family.

The protein localises to the mitochondrion inner membrane. The catalysed reaction is a ubiquinone + NADH + 5 H(+)(in) = a ubiquinol + NAD(+) + 4 H(+)(out). In terms of biological role, core subunit of the mitochondrial membrane respiratory chain NADH dehydrogenase (Complex I) that is believed to belong to the minimal assembly required for catalysis. Complex I functions in the transfer of electrons from NADH to the respiratory chain. The immediate electron acceptor for the enzyme is believed to be ubiquinone. This is NADH-ubiquinone oxidoreductase chain 2 (MT-ND2) from Tetraodon nigroviridis (Spotted green pufferfish).